A 271-amino-acid chain; its full sequence is Phosphatidylglycerol--prolipoprotein diacylglyceryl transferase (271 aa).

4 helical membrane-spanning segments follow: residues 18–38, 51–71, 89–109, and 115–135; these read LSVH…LWMA, IFID…RAYY, IWKG…TGIV, and GISF…GQAI. Arg137 contacts a 1,2-diacyl-sn-glycero-3-phospho-(1'-sn-glycerol). The next 3 membrane-spanning stretches (helical) occupy residues 177–197, 205–225, and 236–256; these read HPTF…LLLL, GNLF…IEGM, and LRIA…LMIF.

The protein belongs to the Lgt family.

The protein localises to the cell membrane. The catalysed reaction is L-cysteinyl-[prolipoprotein] + a 1,2-diacyl-sn-glycero-3-phospho-(1'-sn-glycerol) = an S-1,2-diacyl-sn-glyceryl-L-cysteinyl-[prolipoprotein] + sn-glycerol 1-phosphate + H(+). Its pathway is protein modification; lipoprotein biosynthesis (diacylglyceryl transfer). Its function is as follows. Catalyzes the transfer of the diacylglyceryl group from phosphatidylglycerol to the sulfhydryl group of the N-terminal cysteine of a prolipoprotein, the first step in the formation of mature lipoproteins. In Bacillus velezensis (strain DSM 23117 / BGSC 10A6 / LMG 26770 / FZB42) (Bacillus amyloliquefaciens subsp. plantarum), this protein is Phosphatidylglycerol--prolipoprotein diacylglyceryl transferase.